The following is a 558-amino-acid chain: Potassium-transporting ATPase potassium-binding subunit 1 (558 aa).

12 helical membrane passes run 1–21, 66–86, 127–147, 166–186, 245–265, 281–301, 327–347, 354–374, 377–397, 416–436, 482–502, and 531–551; these read MEII…SGYL, FNGF…WLFL, MIVM…VCIA, IVRF…ILLM, IWSN…MLFL, ALIL…LTMW, FGAG…TGSV, LTPI…VFGG, VGLM…SLMV, IVLV…LAFM, ISTG…QLMI, and IVFI…LGPI.

Belongs to the KdpA family. The system is composed of three essential subunits: KdpA, KdpB and KdpC.

It is found in the cell membrane. Its function is as follows. Part of the high-affinity ATP-driven potassium transport (or Kdp) system, which catalyzes the hydrolysis of ATP coupled with the electrogenic transport of potassium into the cytoplasm. This subunit binds the extracellular potassium ions and delivers the ions to the membrane domain of KdpB through an intramembrane tunnel. This Staphylococcus aureus (strain Mu50 / ATCC 700699) protein is Potassium-transporting ATPase potassium-binding subunit 1.